The chain runs to 321 residues: Lipoyl synthase (321 aa).

The [4Fe-4S] cluster site is built by Cys68, Cys73, Cys79, Cys94, Cys98, Cys101, and Ser308. The Radical SAM core domain occupies 80 to 297; sequence FNHGTATFMI…KEIALELGFT (218 aa).

This sequence belongs to the radical SAM superfamily. Lipoyl synthase family. The cofactor is [4Fe-4S] cluster.

It is found in the cytoplasm. It catalyses the reaction [[Fe-S] cluster scaffold protein carrying a second [4Fe-4S](2+) cluster] + N(6)-octanoyl-L-lysyl-[protein] + 2 oxidized [2Fe-2S]-[ferredoxin] + 2 S-adenosyl-L-methionine + 4 H(+) = [[Fe-S] cluster scaffold protein] + N(6)-[(R)-dihydrolipoyl]-L-lysyl-[protein] + 4 Fe(3+) + 2 hydrogen sulfide + 2 5'-deoxyadenosine + 2 L-methionine + 2 reduced [2Fe-2S]-[ferredoxin]. It functions in the pathway protein modification; protein lipoylation via endogenous pathway; protein N(6)-(lipoyl)lysine from octanoyl-[acyl-carrier-protein]: step 2/2. Functionally, catalyzes the radical-mediated insertion of two sulfur atoms into the C-6 and C-8 positions of the octanoyl moiety bound to the lipoyl domains of lipoate-dependent enzymes, thereby converting the octanoylated domains into lipoylated derivatives. In Vibrio atlanticus (strain LGP32) (Vibrio splendidus (strain Mel32)), this protein is Lipoyl synthase.